Reading from the N-terminus, the 123-residue chain is EVKLVESGGGLVQPGGSLRLSCATSGFTLSDFYMEWVRQTPGKRLEWIAASRNKVYDYTTEYSASVKGRFIVSRDTSQSILYLQMNALRAEDTAIYYCARDAYYGSYWYFDVWGAGTTVTVSS.

The Ig-like domain occupies 1–114; it reads EVKLVESGGG…GSYWYFDVWG (114 aa).

In Mus musculus (Mouse), this protein is Ig heavy chain V region HPCG13.